Reading from the N-terminus, the 335-residue chain is Fructose-1,6-bisphosphatase class 1 (335 aa).

Mg(2+) is bound by residues glutamate 92, aspartate 114, leucine 116, and aspartate 117. Substrate-binding positions include 117–120 (DGSS), asparagine 209, and lysine 275. Position 281 (glutamate 281) interacts with Mg(2+).

The protein belongs to the FBPase class 1 family. In terms of assembly, homotetramer. Mg(2+) is required as a cofactor.

It localises to the cytoplasm. The enzyme catalyses beta-D-fructose 1,6-bisphosphate + H2O = beta-D-fructose 6-phosphate + phosphate. It participates in carbohydrate biosynthesis; gluconeogenesis. The polypeptide is Fructose-1,6-bisphosphatase class 1 (Delftia acidovorans (strain DSM 14801 / SPH-1)).